Consider the following 122-residue polypeptide: Large ribosomal subunit protein uL18 (122 aa).

This sequence belongs to the universal ribosomal protein uL18 family. As to quaternary structure, part of the 50S ribosomal subunit; part of the 5S rRNA/L5/L18/L25 subcomplex. Contacts the 5S and 23S rRNAs.

Functionally, this is one of the proteins that bind and probably mediate the attachment of the 5S RNA into the large ribosomal subunit, where it forms part of the central protuberance. This Geotalea uraniireducens (strain Rf4) (Geobacter uraniireducens) protein is Large ribosomal subunit protein uL18.